Here is a 762-residue protein sequence, read N- to C-terminus: Endonuclease MutS2 (762 aa).

333–340 (GVNAGGKT) lines the ATP pocket. The Smr domain maps to 688-762 (LDLRGQRSEE…GGSGVKIVKL (75 aa)).

Belongs to the DNA mismatch repair MutS family. MutS2 subfamily. In terms of assembly, homodimer. Binds to stalled ribosomes, contacting rRNA.

Functionally, endonuclease that is involved in the suppression of homologous recombination and thus may have a key role in the control of bacterial genetic diversity. Its function is as follows. Acts as a ribosome collision sensor, splitting the ribosome into its 2 subunits. Detects stalled/collided 70S ribosomes which it binds and splits by an ATP-hydrolysis driven conformational change. Acts upstream of the ribosome quality control system (RQC), a ribosome-associated complex that mediates the extraction of incompletely synthesized nascent chains from stalled ribosomes and their subsequent degradation. Probably generates substrates for RQC. In Helicobacter pylori (strain J99 / ATCC 700824) (Campylobacter pylori J99), this protein is Endonuclease MutS2.